A 311-amino-acid chain; its full sequence is tRNA-cytidine(32) 2-sulfurtransferase (311 aa).

The short motif at 47–52 (SGGKDS) is the PP-loop motif element. 3 residues coordinate [4Fe-4S] cluster: Cys-122, Cys-125, and Cys-213.

This sequence belongs to the TtcA family. In terms of assembly, homodimer. Mg(2+) serves as cofactor. [4Fe-4S] cluster is required as a cofactor.

It localises to the cytoplasm. The catalysed reaction is cytidine(32) in tRNA + S-sulfanyl-L-cysteinyl-[cysteine desulfurase] + AH2 + ATP = 2-thiocytidine(32) in tRNA + L-cysteinyl-[cysteine desulfurase] + A + AMP + diphosphate + H(+). It functions in the pathway tRNA modification. Catalyzes the ATP-dependent 2-thiolation of cytidine in position 32 of tRNA, to form 2-thiocytidine (s(2)C32). The sulfur atoms are provided by the cysteine/cysteine desulfurase (IscS) system. This chain is tRNA-cytidine(32) 2-sulfurtransferase, found in Escherichia coli O7:K1 (strain IAI39 / ExPEC).